Reading from the N-terminus, the 485-residue chain is Glutamate--tRNA ligase (485 aa).

A 'HIGH' region motif is present at residues 11-21 (PSPTGHLHIGN). The 'KMSKS' region signature appears at 252-256 (KLSKR). K255 is a binding site for ATP.

The protein belongs to the class-I aminoacyl-tRNA synthetase family. Glutamate--tRNA ligase type 1 subfamily. Monomer.

The protein localises to the cytoplasm. It carries out the reaction tRNA(Glu) + L-glutamate + ATP = L-glutamyl-tRNA(Glu) + AMP + diphosphate. Its function is as follows. Catalyzes the attachment of glutamate to tRNA(Glu) in a two-step reaction: glutamate is first activated by ATP to form Glu-AMP and then transferred to the acceptor end of tRNA(Glu). In Bacillus cereus (strain ATCC 14579 / DSM 31 / CCUG 7414 / JCM 2152 / NBRC 15305 / NCIMB 9373 / NCTC 2599 / NRRL B-3711), this protein is Glutamate--tRNA ligase.